Consider the following 130-residue polypeptide: Small ribosomal subunit protein uS9 (130 aa).

Positions 104 to 130 are disordered; the sequence is LTRDPRMKERKKYGLKKARRAPQFSKR. Residues 111 to 130 are compositionally biased toward basic residues; that stretch reads KERKKYGLKKARRAPQFSKR.

The protein belongs to the universal ribosomal protein uS9 family.

The sequence is that of Small ribosomal subunit protein uS9 from Ruminiclostridium cellulolyticum (strain ATCC 35319 / DSM 5812 / JCM 6584 / H10) (Clostridium cellulolyticum).